The following is a 68-amino-acid chain: uncharacterized protein (68 aa).

This is an uncharacterized protein from Caenorhabditis elegans.